The chain runs to 123 residues: Small ribosomal subunit protein uS12 (123 aa).

A 3-methylthioaspartic acid modification is found at aspartate 89.

This sequence belongs to the universal ribosomal protein uS12 family. In terms of assembly, part of the 30S ribosomal subunit. Contacts proteins S8 and S17. May interact with IF1 in the 30S initiation complex.

Functionally, with S4 and S5 plays an important role in translational accuracy. In terms of biological role, interacts with and stabilizes bases of the 16S rRNA that are involved in tRNA selection in the A site and with the mRNA backbone. Located at the interface of the 30S and 50S subunits, it traverses the body of the 30S subunit contacting proteins on the other side and probably holding the rRNA structure together. The combined cluster of proteins S8, S12 and S17 appears to hold together the shoulder and platform of the 30S subunit. The polypeptide is Small ribosomal subunit protein uS12 (Nitrobacter hamburgensis (strain DSM 10229 / NCIMB 13809 / X14)).